Reading from the N-terminus, the 399-residue chain is Succinate--CoA ligase [ADP-forming] subunit beta (399 aa).

The ATP-grasp domain occupies 9–254; that stretch reads KAVLQPFGVS…ETEEDAKEIE (246 aa). ATP-binding positions include Lys-46, 53 to 55, Glu-109, Ser-112, and Glu-117; that span reads GRG. Mg(2+) contacts are provided by Asn-209 and Asp-223. Substrate is bound by residues Asn-274 and 331–333; that span reads GIM.

This sequence belongs to the succinate/malate CoA ligase beta subunit family. As to quaternary structure, heterotetramer of two alpha and two beta subunits. Mg(2+) serves as cofactor.

It carries out the reaction succinate + ATP + CoA = succinyl-CoA + ADP + phosphate. The enzyme catalyses GTP + succinate + CoA = succinyl-CoA + GDP + phosphate. It functions in the pathway carbohydrate metabolism; tricarboxylic acid cycle; succinate from succinyl-CoA (ligase route): step 1/1. Its function is as follows. Succinyl-CoA synthetase functions in the citric acid cycle (TCA), coupling the hydrolysis of succinyl-CoA to the synthesis of either ATP or GTP and thus represents the only step of substrate-level phosphorylation in the TCA. The beta subunit provides nucleotide specificity of the enzyme and binds the substrate succinate, while the binding sites for coenzyme A and phosphate are found in the alpha subunit. In Rhodopseudomonas palustris (strain BisB18), this protein is Succinate--CoA ligase [ADP-forming] subunit beta.